Here is a 447-residue protein sequence, read N- to C-terminus: Imidazolonepropionase (447 aa).

Fe(3+) is bound by residues His85 and His87. Positions 85 and 87 each coordinate Zn(2+). 4-imidazolone-5-propanoate contacts are provided by Arg94, Tyr157, and His190. Tyr157 serves as a coordination point for N-formimidoyl-L-glutamate. His255 contributes to the Fe(3+) binding site. His255 is a binding site for Zn(2+). Residue Glu258 coordinates 4-imidazolone-5-propanoate. A Fe(3+)-binding site is contributed by Asp329. Asp329 provides a ligand contact to Zn(2+). Residues Asn331 and Gly333 each contribute to the N-formimidoyl-L-glutamate site. Ser334 serves as a coordination point for 4-imidazolone-5-propanoate.

Belongs to the metallo-dependent hydrolases superfamily. HutI family. It depends on Zn(2+) as a cofactor. The cofactor is Fe(3+).

Its subcellular location is the cytoplasm. The catalysed reaction is 4-imidazolone-5-propanoate + H2O = N-formimidoyl-L-glutamate. The protein operates within amino-acid degradation; L-histidine degradation into L-glutamate; N-formimidoyl-L-glutamate from L-histidine: step 3/3. In terms of biological role, catalyzes the hydrolytic cleavage of the carbon-nitrogen bond in imidazolone-5-propanoate to yield N-formimidoyl-L-glutamate. It is the third step in the universal histidine degradation pathway. The polypeptide is Imidazolonepropionase (Shouchella clausii (strain KSM-K16) (Alkalihalobacillus clausii)).